The following is a 195-amino-acid chain: Ephrin-A2 (195 aa).

A signal peptide spans 1-16 (MELSLVVFTVVCWVSV). The 134-residue stretch at 24-157 (SDRHAVYWNS…KLKVYVKPTS (134 aa)) folds into the Ephrin RBD domain. N-linked (GlcNAc...) asparagine glycosylation is present at Asn32. Intrachain disulfides connect Cys57-Cys97 and Cys85-Cys146. Cys174 carries GPI-anchor amidated cysteine lipidation. Residues 175-195 (GADGPCLAVLMLLLVFLLAGV) constitute a propeptide, removed in mature form.

Belongs to the ephrin family. In terms of assembly, binds to the receptor tyrosine kinases epha2, epha3, epha4 and epha5. Interacts with epha8; activates epha8. In terms of tissue distribution, widespread expression in the embryo.

It is found in the cell membrane. Functionally, cell surface GPI-bound ligand for Eph receptors, a family of receptor tyrosine kinases which are crucial for migration, repulsion and adhesion during neuronal, vascular and epithelial development. Binds promiscuously Eph receptors residing on adjacent cells, leading to contact-dependent bidirectional signaling into neighboring cells. The signaling pathway downstream of the receptor is referred to as forward signaling while the signaling pathway downstream of the ephrin ligand is referred to as reverse signaling. With the epha2 receptor may play a role in bone remodeling through regulation of osteoclastogenesis and osteoblastogenesis. This Danio rerio (Zebrafish) protein is Ephrin-A2 (efna2).